Consider the following 380-residue polypeptide: Ubiquitin-like protein 7 (380 aa).

Positions 18-98 (APKSILQLPE…VLRKSWPEPD (81 aa)) constitute a Ubiquitin-like domain. The interval 200 to 313 (TPMPGADSSS…SSGVQSGTPI (114 aa)) is disordered. Low complexity predominate over residues 206 to 221 (DSSSRSMPSSSYRDMP). Phosphoserine is present on S230. Composition is skewed to low complexity over residues 239 to 253 (STRSTPSSSTPSSRP) and 270 to 293 (SELATALALASTPESSSHTPTPGT). Residues 294–313 (QGHSSGTSPMSSGVQSGTPI) show a composition bias toward polar residues. One can recognise a UBA domain in the interval 333 to 377 (SLQIQWQPQLQQLRDMGIQDDELSLRALQATGGDIQAALELIFAG).

In terms of assembly, binds ubiquitin. Interacts with MAVS; this interaction enhances TRIM21-dependent 'Lys-27'-linked polyubiquitination of MAVS. In terms of processing, deubiquitinated by OTUD4 which stabilizes UBL7 expression.

Its function is as follows. Interferon-stimulated protein that positively regulates RNA virus-triggered innate immune signaling. Mechanistically, promotes 'Lys-27'-linked polyubiquitination of MAVS through TRIM21 leading to enhanced the IFN signaling pathway. The polypeptide is Ubiquitin-like protein 7 (Ubl7) (Mus musculus (Mouse)).